Reading from the N-terminus, the 634-residue chain is Hyphal wall protein 1 (634 aa).

The signal sequence occupies residues 1–27 (MRLSTAQLIAIAYYMLSIGATVPQVDG). Disordered stretches follow at residues 40-307 (SYDY…TTTT) and 412-570 (CPLT…SGAI). The segment covering 42 to 114 (DYYQEPCDDY…DYPQQPQEPC (73 aa)) has biased composition (low complexity). The 1; approximate repeat unit spans residues 46–58 (EPCDDYPQQQQQQ). Residues 46–187 (EPCDDYPQQQ…PNIPTDWIPD (142 aa)) form a 14 X 10 AA tandem repeats of [EVIQ]-P-[CDT]-D-[YNW]-P-[PQ]-[QI]-[QP]-[QDN] region. The 2; approximate repeat unit spans residues 59 to 69 (EPCDYPQQQQQ). Residues 70 to 81 (EEPCDYPQQQPQ) form a 3; approximate repeat. 9 repeat units span residues 82 to 91 (EPCDYPQQPQ), 92 to 101 (EPCDYPQQPQ), 102 to 111 (EPCDYPQQPQ), 112 to 121 (EPCDNPPQPD), 122 to 131 (VPCDNPPQPD), 132 to 141 (VPCDNPPQPD), 142 to 151 (VPCDNPPQPD), 152 to 161 (VPCDNPPQPD), and 162 to 171 (QPDDNPPIPN). Over residues 115 to 171 (DNPPQPDVPCDNPPQPDVPCDNPPQPDVPCDNPPQPDVPCDNPPQPDQPDDNPPIPN) the composition is skewed to pro residues. One copy of the 13; truncated repeat lies at 172–179 (IPTDWIPN). Composition is skewed to low complexity over residues 172-183 (IPTDWIPNIPTD) and 193-307 (TTPA…TTTT). Residues 180–187 (IPTDWIPD) form a 14; truncated repeat. N-linked (GlcNAc...) asparagine glycosylation is found at N241 and N286. The segment covering 415–426 (TENTPGTDSTPE) has biased composition (polar residues). Residues 508–550 (ETKPAAPKSSAPATEPSPVAPGTESAPAGPGASSSPKSSVLAS) show a composition bias toward low complexity. N601 is a glycosylation site (N-linked (GlcNAc...) asparagine). G613 is lipidated: GPI-anchor amidated glycine. A propeptide spans 614–634 (AGNNMRLTFGAAIIGIAAFLI) (removed in mature form).

The protein belongs to the HWP1 family. Post-translationally, the GPI-anchor is attached to the protein in the endoplasmic reticulum and serves to target the protein to the cell surface. There, the glucosamine-inositol phospholipid moiety is cleaved off and the GPI-modified mannoprotein is covalently attached via its lipidless GPI glycan remnant to the 1,6-beta-glucan of the outer cell wall layer. Serves as a substrate for mammalian transglutaminases which are necessary for cross-linking between HWP1 and host epithelial cells. Also predicted to be a substrate for cleavage by KEX2. In terms of processing, N- and O-glycosylated.

The protein localises to the secreted. It localises to the cell wall. It is found in the membrane. In terms of biological role, major hyphal cell wall protein which plays a role of adhesin and is required for mating, normal hyphal development, cell-to-cell adhesive functions necessary for biofilm integrity, attachment to host, and virulence. Promotes interactions with host and bacterial molecules, thus leading to effective colonization within polymicrobial communities. Plays a crucial role in gastrointestinal colonization, in mucosal symptomatic and asymptomatic infections, in vaginitis, as well as in lethal oroesophageal candidiasis, caused by the combined action of fungal virulence factors and host inflammatory responses when protective immunity is absent. In Candida albicans (strain SC5314 / ATCC MYA-2876) (Yeast), this protein is Hyphal wall protein 1 (HWP1).